The following is a 573-amino-acid chain: Proline--tRNA ligase (573 aa).

It belongs to the class-II aminoacyl-tRNA synthetase family. ProS type 1 subfamily. Homodimer.

The protein localises to the cytoplasm. The catalysed reaction is tRNA(Pro) + L-proline + ATP = L-prolyl-tRNA(Pro) + AMP + diphosphate. Its function is as follows. Catalyzes the attachment of proline to tRNA(Pro) in a two-step reaction: proline is first activated by ATP to form Pro-AMP and then transferred to the acceptor end of tRNA(Pro). As ProRS can inadvertently accommodate and process non-cognate amino acids such as alanine and cysteine, to avoid such errors it has two additional distinct editing activities against alanine. One activity is designated as 'pretransfer' editing and involves the tRNA(Pro)-independent hydrolysis of activated Ala-AMP. The other activity is designated 'posttransfer' editing and involves deacylation of mischarged Ala-tRNA(Pro). The misacylated Cys-tRNA(Pro) is not edited by ProRS. The chain is Proline--tRNA ligase from Moorella thermoacetica (strain ATCC 39073 / JCM 9320).